The primary structure comprises 347 residues: Phosphate acyltransferase (347 aa).

Belongs to the PlsX family. In terms of assembly, homodimer. Probably interacts with PlsY.

It is found in the cytoplasm. It carries out the reaction a fatty acyl-[ACP] + phosphate = an acyl phosphate + holo-[ACP]. Its pathway is lipid metabolism; phospholipid metabolism. Its function is as follows. Catalyzes the reversible formation of acyl-phosphate (acyl-PO(4)) from acyl-[acyl-carrier-protein] (acyl-ACP). This enzyme utilizes acyl-ACP as fatty acyl donor, but not acyl-CoA. The protein is Phosphate acyltransferase of Syntrophotalea carbinolica (strain DSM 2380 / NBRC 103641 / GraBd1) (Pelobacter carbinolicus).